Reading from the N-terminus, the 388-residue chain is Succinate--CoA ligase [ADP-forming] subunit beta (388 aa).

Residues 9–244 (KQLFAEYGLP…PSQDDAREAH (236 aa)) enclose the ATP-grasp domain. ATP contacts are provided by residues lysine 46, 53–55 (GRG), glutamate 99, threonine 102, and glutamate 107. Mg(2+) is bound by residues asparagine 199 and aspartate 213. Substrate is bound by residues asparagine 264 and 321-323 (GIV).

It belongs to the succinate/malate CoA ligase beta subunit family. In terms of assembly, heterotetramer of two alpha and two beta subunits. The cofactor is Mg(2+).

The enzyme catalyses succinate + ATP + CoA = succinyl-CoA + ADP + phosphate. It carries out the reaction GTP + succinate + CoA = succinyl-CoA + GDP + phosphate. It functions in the pathway carbohydrate metabolism; tricarboxylic acid cycle; succinate from succinyl-CoA (ligase route): step 1/1. Its function is as follows. Succinyl-CoA synthetase functions in the citric acid cycle (TCA), coupling the hydrolysis of succinyl-CoA to the synthesis of either ATP or GTP and thus represents the only step of substrate-level phosphorylation in the TCA. The beta subunit provides nucleotide specificity of the enzyme and binds the substrate succinate, while the binding sites for coenzyme A and phosphate are found in the alpha subunit. This is Succinate--CoA ligase [ADP-forming] subunit beta from Pseudomonas paraeruginosa (strain DSM 24068 / PA7) (Pseudomonas aeruginosa (strain PA7)).